The chain runs to 210 residues: Ribonuclease HII (210 aa).

In terms of domain architecture, RNase H type-2 spans 2–203; sequence SGVMGIDEAG…YKRVESEVKQ (202 aa). A divalent metal cation-binding residues include Asp-8, Glu-9, and Asp-99.

The protein belongs to the RNase HII family. It depends on Mn(2+) as a cofactor. Mg(2+) serves as cofactor.

The protein localises to the cytoplasm. It catalyses the reaction Endonucleolytic cleavage to 5'-phosphomonoester.. In terms of biological role, endonuclease that specifically degrades the RNA of RNA-DNA hybrids. The protein is Ribonuclease HII of Methanopyrus kandleri (strain AV19 / DSM 6324 / JCM 9639 / NBRC 100938).